The chain runs to 1032 residues: Vacuolar membrane protease (1032 aa).

Residues 1–11 lie on the Cytoplasmic side of the membrane; sequence MRFQNPFAFRP. The chain crosses the membrane as a helical span at residues 12–32; the sequence is GPVSFWTTVIYLALVIPLIYV. At 33–426 the chain is on the vacuolar side; the sequence is HETVPPAPSD…AWAVFALRGL (394 aa). Asparagine 50 and asparagine 142 each carry an N-linked (GlcNAc...) asparagine glycan. Residues histidine 207 and aspartate 219 each coordinate Zn(2+). The active-site Proton acceptor is the glutamate 253. Residues glutamate 254, glutamate 279, and histidine 352 each coordinate Zn(2+). A helical transmembrane segment spans residues 427–447; sequence FAWSLTLLVATPLILVAITYI. Over 448-482 the chain is Cytoplasmic; sequence LARKDKYYFFSRDIKMHHDINDDPVVLGGWKGFLR. A helical membrane pass occupies residues 483–503; it reads FPFALVFAGALTIASTLLLAK. Over 504 to 511 the chain is Vacuolar; it reads FNPLIIYS. The chain crosses the membrane as a helical span at residues 512 to 532; it reads SPYAVWSMTLSIFYFSFWLIM. Over 533–545 the chain is Cytoplasmic; sequence RGASFIRPSALHR. A helical membrane pass occupies residues 546–566; it reads GYVLIWLFALGWGLQVVGAVA. Residues 567 to 573 lie on the Vacuolar side of the membrane; the sequence is EDRLHIA. A helical membrane pass occupies residues 574–594; sequence ALYATVFLQSAVFLALFISLL. Residues 595–708 are Cytoplasmic-facing; that stretch reads EQFALLGKHD…WSGRLPSWTW (114 aa). Over residues 616–631 the composition is skewed to basic and acidic residues; the sequence is RDISSHGTDHESRPQP. The interval 616–666 is disordered; the sequence is RDISSHGTDHESRPQPEEEPAQPEGDEDESEDATETTPLRANEPGYGSSTR. Acidic residues predominate over residues 632 to 649; the sequence is EEEPAQPEGDEDESEDAT. Residues 709–729 form a helical membrane-spanning segment; it reads IIQFLLLAPVPVILFGNLGLV. Residues 730–745 lie on the Vacuolar side of the membrane; it reads AMSALQMTGTDGGSLL. A helical transmembrane segment spans residues 746–766; that stretch reads VPVLTLGIVSIFLLLPLTPFI. At 767–773 the chain is on the cytoplasmic side; the sequence is HRVSHHV. The helical transmembrane segment at 774 to 794 threads the bilayer; the sequence is PMFLLCVFAGTFIYNLVAFPF. Topologically, residues 795 to 1032 are vacuolar; sequence SDSHRFKFYF…LVEVRKTYKV (238 aa). Asparagine 812 and asparagine 884 each carry an N-linked (GlcNAc...) asparagine glycan.

This sequence belongs to the peptidase M28 family. Zn(2+) serves as cofactor.

Its subcellular location is the vacuole membrane. Functionally, may be involved in vacuolar sorting and osmoregulation. The protein is Vacuolar membrane protease of Fusarium vanettenii (strain ATCC MYA-4622 / CBS 123669 / FGSC 9596 / NRRL 45880 / 77-13-4) (Fusarium solani subsp. pisi).